A 181-amino-acid chain; its full sequence is Ribonuclease HII (181 aa).

Positions 1-181 constitute an RNase H type-2 domain; the sequence is MICGIDEVGR…SLHRRNFKLI (181 aa). A divalent metal cation contacts are provided by aspartate 6, glutamate 7, and aspartate 98.

Belongs to the RNase HII family. It depends on Mn(2+) as a cofactor. Requires Mg(2+) as cofactor.

The protein resides in the cytoplasm. It carries out the reaction Endonucleolytic cleavage to 5'-phosphomonoester.. Functionally, endonuclease that specifically degrades the RNA of RNA-DNA hybrids. The chain is Ribonuclease HII from Borrelia garinii subsp. bavariensis (strain ATCC BAA-2496 / DSM 23469 / PBi) (Borreliella bavariensis).